Consider the following 491-residue polypeptide: Chromosomal replication initiator protein DnaA (491 aa).

Residues M1–L69 form a domain I, interacts with DnaA modulators region. The segment at L69 to L154 is domain II. Residues P155 to S371 are domain III, AAA+ region. ATP is bound by residues G199, G201, K202, and T203. A domain IV, binds dsDNA region spans residues K372 to R491.

Belongs to the DnaA family. In terms of assembly, oligomerizes as a right-handed, spiral filament on DNA at oriC.

It localises to the cytoplasm. In terms of biological role, plays an essential role in the initiation and regulation of chromosomal replication. ATP-DnaA binds to the origin of replication (oriC) to initiate formation of the DNA replication initiation complex once per cell cycle. Binds the DnaA box (a 9 base pair repeat at the origin) and separates the double-stranded (ds)DNA. Forms a right-handed helical filament on oriC DNA; dsDNA binds to the exterior of the filament while single-stranded (ss)DNA is stabiized in the filament's interior. The ATP-DnaA-oriC complex binds and stabilizes one strand of the AT-rich DNA unwinding element (DUE), permitting loading of DNA polymerase. After initiation quickly degrades to an ADP-DnaA complex that is not apt for DNA replication. Binds acidic phospholipids. This is Chromosomal replication initiator protein DnaA from Francisella tularensis subsp. tularensis (strain WY96-3418).